A 485-amino-acid chain; its full sequence is MTITPQHLIALLPLLIVGLTVVVVMLSIAWRRNHFLNATLSVIGLNAALVSLWFVGQAGAMDVTPLMRVDGFAMLYTGLVLLASLATCTFAYPWLEGYNDNQEEFYLLVLIASLGGILLANANHLATLFLGIELISLPLFGLIGYAFRQKRSLEASIKYTILSAAASSFLLFGMALVYAQSGNLSFEALGKSLGDGMLHEPLLLAGFGLMIVGPGFKLSLVPFHLWTPDVYQGAPAPVSTFLATASKIAIFGVVMRLFLYAPVGDSEAVRVVLGIIAFASIIFGNLMALSQTNIKRLLGYSSISHLGYLLVALIALQSGEMSMEAVGVYLAGYLFSSLGAFGVVSLMSSPFRGPDADSLYSYRGLFWHRPVLAAVMTVMMLSLAGIPMTLGFIGKFYVLAVGVQASLWWLVAAVVVGSAIGLYYYLRVAVSLYLHAPQQPGRDAPTNWQYSAGGIVVLISALLVLVLGVWPQPLISLVQLATPLM.

14 consecutive transmembrane segments (helical) span residues 8–28 (LIAL…MLSI), 35–55 (FLNA…LWFV), 71–91 (GFAM…CTFA), 105–125 (FYLL…ANHL), 127–147 (TLFL…GYAF), 159–179 (YTIL…LVYA), 203–223 (LLAG…LVPF), 235–255 (PAPV…GVVM), 271–291 (VVLG…ALSQ), 297–317 (LLGY…IALQ), 326–346 (VGVY…VVSL), 373–393 (AAVM…LGFI), 408–430 (WWLV…RVAV), and 455–475 (IVVL…QPLI).

This sequence belongs to the complex I subunit 2 family. NDH-1 is composed of 13 different subunits. Subunits NuoA, H, J, K, L, M, N constitute the membrane sector of the complex.

The protein localises to the cell inner membrane. The catalysed reaction is a quinone + NADH + 5 H(+)(in) = a quinol + NAD(+) + 4 H(+)(out). Its function is as follows. NDH-1 shuttles electrons from NADH, via FMN and iron-sulfur (Fe-S) centers, to quinones in the respiratory chain. The immediate electron acceptor for the enzyme in this species is believed to be ubiquinone. Couples the redox reaction to proton translocation (for every two electrons transferred, four hydrogen ions are translocated across the cytoplasmic membrane), and thus conserves the redox energy in a proton gradient. The polypeptide is NADH-quinone oxidoreductase subunit N (Salmonella paratyphi A (strain ATCC 9150 / SARB42)).